A 1124-amino-acid polypeptide reads, in one-letter code: Putative DNA mismatch repair protein mutS homolog L359 (1124 aa).

779-786 serves as a coordination point for ATP; that stretch reads SNNWAGKS.

This sequence belongs to the DNA mismatch repair MutS family.

Its function is as follows. May be involved in DNA-mismatch repair. This is Putative DNA mismatch repair protein mutS homolog L359 from Acanthamoeba polyphaga (Amoeba).